Reading from the N-terminus, the 372-residue chain is Histidinol-phosphate aminotransferase (372 aa).

The residue at position 234 (lysine 234) is an N6-(pyridoxal phosphate)lysine.

Belongs to the class-II pyridoxal-phosphate-dependent aminotransferase family. Histidinol-phosphate aminotransferase subfamily. As to quaternary structure, homodimer. It depends on pyridoxal 5'-phosphate as a cofactor.

The catalysed reaction is L-histidinol phosphate + 2-oxoglutarate = 3-(imidazol-4-yl)-2-oxopropyl phosphate + L-glutamate. Its pathway is amino-acid biosynthesis; L-histidine biosynthesis; L-histidine from 5-phospho-alpha-D-ribose 1-diphosphate: step 7/9. This is Histidinol-phosphate aminotransferase (hisC) from Corynebacterium efficiens (strain DSM 44549 / YS-314 / AJ 12310 / JCM 11189 / NBRC 100395).